The primary structure comprises 422 residues: Tyrosine-protein kinase STYK1 (422 aa).

A helical transmembrane segment spans residues 26 to 46; that stretch reads VIIVPTLLVTIFLILLGVILW. The region spanning 114-384 is the Protein kinase domain; it reads SEVLEQICSG…ELRLRLEAAI (271 aa). Residues 120 to 128 and K147 each bind ATP; that span reads ICSGSCGPI. Residue D251 is the Proton acceptor of the active site.

This sequence belongs to the protein kinase superfamily. Tyr protein kinase family. As to expression, widely expressed. Highly expressed in brain, placenta and prostate. Expressed in tumor cells such as hepatoma cells L-02, cervix carcinoma cells HeLa, ovary cancer cells Ho8910 and chronic myelogenous leukemia cells K-562, but not in other tumor cells such as epidermoid carcinoma (A-431). Undetectable in most normal lung tissues, widely expressed in lung cancers.

It is found in the membrane. It catalyses the reaction L-tyrosyl-[protein] + ATP = O-phospho-L-tyrosyl-[protein] + ADP + H(+). In terms of biological role, probable tyrosine protein-kinase, which has strong transforming capabilities on a variety of cell lines. When overexpressed, it can also induce tumor cell invasion as well as metastasis in distant organs. May act by activating both MAP kinase and phosphatidylinositol 3'-kinases (PI3K) pathways. This Homo sapiens (Human) protein is Tyrosine-protein kinase STYK1 (STYK1).